The sequence spans 298 residues: Glutamyl-Q tRNA(Asp) synthetase (298 aa).

L-glutamate-binding positions include 8-12 (RFAPS) and glutamate 44. The short motif at 11 to 21 (PSPTGPLHFGS) is the 'HIGH' region element. Cysteine 100, cysteine 102, tyrosine 123, and cysteine 127 together coordinate Zn(2+). L-glutamate-binding residues include tyrosine 183 and arginine 201. Positions 239–243 (KLSKQ) match the 'KMSKS' region motif. ATP is bound at residue lysine 242.

The protein belongs to the class-I aminoacyl-tRNA synthetase family. GluQ subfamily. It depends on Zn(2+) as a cofactor.

Catalyzes the tRNA-independent activation of glutamate in presence of ATP and the subsequent transfer of glutamate onto a tRNA(Asp). Glutamate is transferred on the 2-amino-5-(4,5-dihydroxy-2-cyclopenten-1-yl) moiety of the queuosine in the wobble position of the QUC anticodon. This Burkholderia cenocepacia (strain ATCC BAA-245 / DSM 16553 / LMG 16656 / NCTC 13227 / J2315 / CF5610) (Burkholderia cepacia (strain J2315)) protein is Glutamyl-Q tRNA(Asp) synthetase.